Reading from the N-terminus, the 398-residue chain is Lysophospholipid transporter LplT (398 aa).

Helical transmembrane passes span 17–37 (AVLV…FAIL), 52–72 (ILQI…GQIA), 90–110 (LGAF…LVGV), 137–157 (GLME…GGFL), 163–183 (AIAL…NFFI), 226–246 (LFWG…PVVL), 256–276 (ILNV…ARFI), 285–305 (MPAG…HSIW), 309–329 (VLLI…NALL), 352–372 (IAML…VPVV), and 373–393 (TTGI…WIWN).

Belongs to the major facilitator superfamily. LplT (TC 2.A.1.42) family.

The protein localises to the cell inner membrane. Functionally, catalyzes the facilitated diffusion of 2-acyl-glycero-3-phosphoethanolamine (2-acyl-GPE) into the cell. The sequence is that of Lysophospholipid transporter LplT from Photorhabdus laumondii subsp. laumondii (strain DSM 15139 / CIP 105565 / TT01) (Photorhabdus luminescens subsp. laumondii).